Here is a 69-residue protein sequence, read N- to C-terminus: Sperm protamine P1 (69 aa).

Positions 1 to 69 (MARYRHSRSR…YSRRRRRRYY (69 aa)) are disordered.

It belongs to the protamine P1 family. Testis.

Its subcellular location is the nucleus. The protein localises to the chromosome. In terms of biological role, protamines substitute for histones in the chromatin of sperm during the haploid phase of spermatogenesis. They compact sperm DNA into a highly condensed, stable and inactive complex. This chain is Sperm protamine P1 (PRM1), found in Pseudochirops cupreus (Coppery ringtail).